Consider the following 202-residue polypeptide: Cytochrome c oxidase assembly protein CtaG (202 aa).

Topologically, residues 1 to 14 are cytoplasmic; the sequence is MSENAGTPKKQGRN. A helical; Signal-anchor for type II membrane protein membrane pass occupies residues 15-37; that stretch reads NGAVVMMCLSFVFGMGAMSYAAV. Over 38 to 202 the chain is Periplasmic; the sequence is PLYRIFCQVT…GGAEKIEKKL (165 aa).

Belongs to the COX11/CtaG family.

It localises to the cell inner membrane. In terms of biological role, exerts its effect at some terminal stage of cytochrome c oxidase synthesis, probably by being involved in the insertion of the copper B into subunit I. The polypeptide is Cytochrome c oxidase assembly protein CtaG (Rhizobium johnstonii (strain DSM 114642 / LMG 32736 / 3841) (Rhizobium leguminosarum bv. viciae)).